Reading from the N-terminus, the 618-residue chain is Nuclear cap-binding protein subunit 3 (618 aa).

The interval 1–53 (MAAVRGLRVSVKAGGGAEPEPMEVEEGEVEAAAGRTSPVEATADQTSPREVVP) is disordered. The segment covering 20 to 29 (EPMEVEEGEV) has biased composition (acidic residues). The segment at 117–178 (ETLYICGVDE…LSSKPTNEKG (62 aa)) is RNA recognition motif (RRM) domain. Residues 146–149 (WLDD) carry the WLDD motif; essential for 7-methylguanosine-containing mRNA cap binding motif. Disordered regions lie at residues 170–250 (SSKP…DLRP), 342–366 (PEEP…DDRV), and 426–618 (QLKT…DTDS). Residues 174-188 (TNEKGQRKKDGEHRS) show a composition bias toward basic and acidic residues. The segment covering 205–223 (DETEEGEVEEDNPNDAEVE) has biased composition (acidic residues). Polar residues predominate over residues 231-240 (PPETLSQAEQ). Residues 344-365 (EPIEEEEEEEEEEEEDMDEDDR) show a composition bias toward acidic residues. Residues 436–450 (SDSAGNSVKSRIGSK) are compositionally biased toward polar residues. Basic and acidic residues predominate over residues 451–468 (SHSEKPADVRLILEEKRQ). Residues 469 to 481 (STASRQQSSSSGK) show a composition bias toward low complexity. 3 stretches are compositionally biased toward basic and acidic residues: residues 507-517 (SRREPLSDVHS), 550-562 (PKEK…KSGE), and 583-596 (IKEK…KSRL). Low complexity predominate over residues 609–618 (ESSSGSDTDS).

It belongs to the NCBP3 family. As to quaternary structure, component of an alternative cap-binding complex (CBC) composed of NCBP1/CBP80 and NCBP3.

It is found in the nucleus. The protein localises to the cytoplasm. Associates with NCBP1/CBP80 to form an alternative cap-binding complex (CBC) which plays a key role in mRNA export. NCBP3 serves as adapter protein linking the capped RNAs (m7GpppG-capped RNA) to NCBP1/CBP80. Unlike the conventional CBC with NCBP2 which binds both small nuclear RNA (snRNA) and messenger (mRNA) and is involved in their export from the nucleus, the alternative CBC with NCBP3 does not bind snRNA and associates only with mRNA thereby playing a role in only mRNA export. The sequence is that of Nuclear cap-binding protein subunit 3 from Xenopus laevis (African clawed frog).